Here is a 588-residue protein sequence, read N- to C-terminus: Proteasome-associated ATPase (588 aa).

Over residues 1-10 (MAAHDDDMNR) the composition is skewed to basic and acidic residues. The interval 1-23 (MAAHDDDMNRGIRPGRGSDDPAG) is disordered. Positions 47–94 (RILEERIVELQTNLAGVSAQNERLANTLREARDQIVALKEEVDRLAQP) form a coiled coil. Residue 276-281 (GCGKTL) coordinates ATP. Residues 587–588 (YL) are docks into pockets in the proteasome alpha-ring.

It belongs to the AAA ATPase family. In terms of assembly, homohexamer. Assembles into a hexameric ring structure that caps the 20S proteasome core. Strongly interacts with the prokaryotic ubiquitin-like protein Pup through a hydrophobic interface; the interacting region of ARC lies in its N-terminal coiled-coil domain. There is one Pup binding site per ARC hexamer ring. Upon ATP-binding, the C-terminus of ARC interacts with the alpha-rings of the proteasome core, possibly by binding to the intersubunit pockets.

The protein operates within protein degradation; proteasomal Pup-dependent pathway. In terms of biological role, ATPase which is responsible for recognizing, binding, unfolding and translocation of pupylated proteins into the bacterial 20S proteasome core particle. May be essential for opening the gate of the 20S proteasome via an interaction with its C-terminus, thereby allowing substrate entry and access to the site of proteolysis. Thus, the C-termini of the proteasomal ATPase may function like a 'key in a lock' to induce gate opening and therefore regulate proteolysis. This Streptomyces avermitilis (strain ATCC 31267 / DSM 46492 / JCM 5070 / NBRC 14893 / NCIMB 12804 / NRRL 8165 / MA-4680) protein is Proteasome-associated ATPase.